The primary structure comprises 300 residues: Cytochrome f (300 aa).

An N-terminal signal peptide occupies residues 1–32 (MMTYLSKQFSKLLFGQLLFLFIGNLLLKPVQA). Heme is bound by residues Tyr33, Cys53, Cys56, and His57. The helical transmembrane segment at 267-287 (LKTFIAFCVTVFIGQLAFVLK) threads the bilayer.

Belongs to the cytochrome f family. In terms of assembly, the 4 large subunits of the cytochrome b6-f complex are cytochrome b6, subunit IV (17 kDa polypeptide, petD), cytochrome f and the Rieske protein, while the 4 small subunits are PetG, PetL, PetM and PetN. The complex functions as a dimer. The cofactor is heme.

It is found in the plastid. It localises to the chloroplast thylakoid membrane. Its function is as follows. Component of the cytochrome b6-f complex, which mediates electron transfer between photosystem II (PSII) and photosystem I (PSI), cyclic electron flow around PSI, and state transitions. This is Cytochrome f from Cyanidioschyzon merolae (strain NIES-3377 / 10D) (Unicellular red alga).